The following is a 312-amino-acid chain: Taste receptor type 2 member 7 (312 aa).

The Extracellular portion of the chain corresponds to 1–9 (MTYETDTTL). The chain crosses the membrane as a helical span at residues 10-30 (MFVAVCEALVGILGNAFIALV). Over 31-49 (NFMGWMKNRKITAIDLILS) the chain is Cytoplasmic. The helical transmembrane segment at 50 to 70 (SLAMSRICLQCIILLDCIILV) threads the bilayer. Over 71 to 101 (QYPDTYNRGKEMRIIDFFWTLTNHLSVWFAT) the chain is Extracellular. The chain crosses the membrane as a helical span at residues 102–122 (CLSIFYFFKIANFFHPLFLWI). The Cytoplasmic portion of the chain corresponds to 123-128 (KWRIDK). The helical transmembrane segment at 129-149 (LILRTLLACLILSLCFSLPVT) threads the bilayer. Topologically, residues 150 to 187 (ENLTDDFRRCVKTKERINSTLRCKLNKAGYASVKVNLN) are extracellular. Asn151 and Asn167 each carry an N-linked (GlcNAc...) asparagine glycan. Residues 188-208 (LVMLFPFSVSLVSFLLLILSL) traverse the membrane as a helical segment. Over 209–235 (WRHTRQMQLNVTGYNDPSTTAHVKATK) the chain is Cytoplasmic. A helical transmembrane segment spans residues 236–256 (AVISFLVLFIVYCLAFLIATS). The Extracellular segment spans residues 257–266 (SYFMPESELA). A helical membrane pass occupies residues 267–287 (VIWGELIALIYPSSHSFILIL). Residues 288–312 (GNSKLKQASVRVLCRVKTMLKGRKY) are Cytoplasmic-facing.

Belongs to the G-protein coupled receptor T2R family. Expressed in subsets of taste receptor cells of the tongue and palate epithelium and exclusively in gustducin-positive cells. Expressed in 15% taste bud cells in circumvallate and foliate papillae but only in 2% in fungiform papillae. Expressed in the duodenum, antrum and fundus (part of the stomach) and in gastric endocrine cells.

The protein resides in the membrane. In terms of biological role, gustducin-coupled receptor implicated in the perception of bitter compounds in the oral cavity and the gastrointestinal tract. Signals through PLCB2 and the calcium-regulated cation channel TRPM5. In Rattus norvegicus (Rat), this protein is Taste receptor type 2 member 7 (Tas2r7).